Reading from the N-terminus, the 112-residue chain is SRA stem-loop-interacting RNA-binding protein, mitochondrial (112 aa).

Position 15 is a phosphoserine (Ser15). One can recognise an RRM domain in the interval 19-98; that stretch reads PIAFVRKIPW…IHVQAQRAKA (80 aa). At Thr104 the chain carries Phosphothreonine. Residue Ser105 is modified to Phosphoserine.

The protein resides in the mitochondrion. It is found in the nucleus. Its function is as follows. RNA-binding protein that acts as a nuclear receptor corepressor. Probably acts by binding the SRA RNA, and repressing the SRA-mediated nuclear receptor coactivation. Binds the STR7 loop of SRA RNA. Also able to repress glucocorticoid (GR), androgen (AR), thyroid (TR) and VDR-mediated transactivation. This chain is SRA stem-loop-interacting RNA-binding protein, mitochondrial (Slirp), found in Mus musculus (Mouse).